Reading from the N-terminus, the 64-residue chain is Small ribosomal subunit protein eS17 (64 aa).

Belongs to the eukaryotic ribosomal protein eS17 family.

This chain is Small ribosomal subunit protein eS17, found in Methanosarcina barkeri (strain Fusaro / DSM 804).